A 260-amino-acid chain; its full sequence is Ribose-5-phosphate isomerase (260 aa).

It belongs to the ribose 5-phosphate isomerase family.

Its subcellular location is the cytoplasm. It catalyses the reaction aldehydo-D-ribose 5-phosphate = D-ribulose 5-phosphate. The protein operates within carbohydrate degradation; pentose phosphate pathway; D-ribose 5-phosphate from D-ribulose 5-phosphate (non-oxidative stage): step 1/1. The chain is Ribose-5-phosphate isomerase (RKI1) from Candida glabrata (strain ATCC 2001 / BCRC 20586 / JCM 3761 / NBRC 0622 / NRRL Y-65 / CBS 138) (Yeast).